We begin with the raw amino-acid sequence, 498 residues long: 3-octaprenyl-4-hydroxybenzoate carboxy-lyase (498 aa).

Residue Asn-176 participates in Mn(2+) binding. Prenylated FMN is bound by residues 179–181 (IYR), 193–195 (RWL), and 198–199 (RG). A Mn(2+)-binding site is contributed by Glu-242. Asp-291 functions as the Proton donor in the catalytic mechanism.

Belongs to the UbiD family. As to quaternary structure, homohexamer. Prenylated FMN is required as a cofactor. Requires Mn(2+) as cofactor.

Its subcellular location is the cell membrane. It catalyses the reaction a 4-hydroxy-3-(all-trans-polyprenyl)benzoate + H(+) = a 2-(all-trans-polyprenyl)phenol + CO2. The protein operates within cofactor biosynthesis; ubiquinone biosynthesis. In terms of biological role, catalyzes the decarboxylation of 3-octaprenyl-4-hydroxy benzoate to 2-octaprenylphenol, an intermediate step in ubiquinone biosynthesis. In Escherichia coli O6:K15:H31 (strain 536 / UPEC), this protein is 3-octaprenyl-4-hydroxybenzoate carboxy-lyase.